The sequence spans 121 residues: Large ribosomal subunit protein eL18 (121 aa).

This sequence belongs to the eukaryotic ribosomal protein eL18 family.

The polypeptide is Large ribosomal subunit protein eL18 (Methanosphaerula palustris (strain ATCC BAA-1556 / DSM 19958 / E1-9c)).